Reading from the N-terminus, the 358-residue chain is Probable D-xylulose reductase A (358 aa).

C47, H72, and E73 together coordinate Zn(2+). Residue 182–187 (GAGPVG) participates in NAD(+) binding.

It belongs to the zinc-containing alcohol dehydrogenase family. The cofactor is Zn(2+).

The enzyme catalyses xylitol + NAD(+) = D-xylulose + NADH + H(+). The protein operates within carbohydrate degradation; L-arabinose degradation via L-arabinitol; D-xylulose 5-phosphate from L-arabinose (fungal route): step 4/5. In terms of biological role, xylitol dehydrogenase which catalyzes the conversion of xylitol to D-xylulose. Xylose is a major component of hemicelluloses such as xylan. Most fungi utilize D-xylose via three enzymatic reactions, xylose reductase (XR), xylitol dehydrogenase (XDH), and xylulokinase, to form xylulose 5-phosphate, which enters pentose phosphate pathway. The protein is Probable D-xylulose reductase A (xdhA) of Neosartorya fischeri (strain ATCC 1020 / DSM 3700 / CBS 544.65 / FGSC A1164 / JCM 1740 / NRRL 181 / WB 181) (Aspergillus fischerianus).